A 351-amino-acid chain; its full sequence is Signal recognition particle receptor FtsY (351 aa).

GTP is bound by residues 156–163 (GINGTGKT), 238–242 (DTAGR), and 302–305 (TKLD).

This sequence belongs to the GTP-binding SRP family. FtsY subfamily. Part of the signal recognition particle protein translocation system, which is composed of SRP and FtsY. SRP is a ribonucleoprotein composed of Ffh and a 4.5S RNA molecule.

It localises to the cell membrane. Its subcellular location is the cytoplasm. It catalyses the reaction GTP + H2O = GDP + phosphate + H(+). In terms of biological role, involved in targeting and insertion of nascent membrane proteins into the cytoplasmic membrane. Acts as a receptor for the complex formed by the signal recognition particle (SRP) and the ribosome-nascent chain (RNC). Interaction with SRP-RNC leads to the transfer of the RNC complex to the Sec translocase for insertion into the membrane, the hydrolysis of GTP by both Ffh and FtsY, and the dissociation of the SRP-FtsY complex into the individual components. This Buchnera aphidicola subsp. Schizaphis graminum (strain Sg) protein is Signal recognition particle receptor FtsY.